The sequence spans 298 residues: N-acetylmuramic acid 6-phosphate etherase (298 aa).

The 164-residue stretch at 55–218 (IHAQVSGGGR…STGLMIKSGK (164 aa)) folds into the SIS domain. Glutamate 83 functions as the Proton donor in the catalytic mechanism. Glutamate 114 is an active-site residue.

This sequence belongs to the GCKR-like family. MurNAc-6-P etherase subfamily. In terms of assembly, homodimer.

The catalysed reaction is N-acetyl-D-muramate 6-phosphate + H2O = N-acetyl-D-glucosamine 6-phosphate + (R)-lactate. It participates in amino-sugar metabolism; 1,6-anhydro-N-acetylmuramate degradation. It functions in the pathway amino-sugar metabolism; N-acetylmuramate degradation. Its pathway is cell wall biogenesis; peptidoglycan recycling. Specifically catalyzes the cleavage of the D-lactyl ether substituent of MurNAc 6-phosphate, producing GlcNAc 6-phosphate and D-lactate. Together with AnmK, is also required for the utilization of anhydro-N-acetylmuramic acid (anhMurNAc) either imported from the medium or derived from its own cell wall murein, and thus plays a role in cell wall recycling. The polypeptide is N-acetylmuramic acid 6-phosphate etherase (Escherichia coli O17:K52:H18 (strain UMN026 / ExPEC)).